Here is a 348-residue protein sequence, read N- to C-terminus: Dihydroorotase (348 aa).

2 residues coordinate Zn(2+): histidine 14 and histidine 16. Substrate-binding positions include 16 to 18 (HLR) and asparagine 42. Zn(2+) contacts are provided by lysine 100, histidine 137, and histidine 175. Lysine 100 bears the N6-carboxylysine mark. Position 137 (histidine 137) interacts with substrate. Residue leucine 220 participates in substrate binding. Aspartate 248 contributes to the Zn(2+) binding site. Aspartate 248 is a catalytic residue. Substrate contacts are provided by histidine 252 and alanine 264.

This sequence belongs to the metallo-dependent hydrolases superfamily. DHOase family. Class II DHOase subfamily. Homodimer. Zn(2+) is required as a cofactor.

The catalysed reaction is (S)-dihydroorotate + H2O = N-carbamoyl-L-aspartate + H(+). It participates in pyrimidine metabolism; UMP biosynthesis via de novo pathway; (S)-dihydroorotate from bicarbonate: step 3/3. Its function is as follows. Catalyzes the reversible cyclization of carbamoyl aspartate to dihydroorotate. This Pseudomonas fluorescens (strain Pf0-1) protein is Dihydroorotase.